We begin with the raw amino-acid sequence, 348 residues long: Protein RecA (348 aa).

ATP is bound at residue 64–71; that stretch reads GPESSGKT.

Belongs to the RecA family. Monomer; forms higher-order oligomers. Interacts with RecU. Interacts with DprA (smf). Interacts with RecD2.

The protein resides in the cytoplasm. It is found in the nucleoid. In terms of biological role, multifunctional protein involved in homologous recombination, DNA repair and competence. Can catalyze the hydrolysis of (d)ATP in the presence of single-stranded (ss)DNA; prefers dATP at least in vitro, catalyzes the dATP-dependent uptake of ssDNA by duplex DNA, and the dATP-dependent hybridization of homologous ssDNA (strand exchange). RecA-ATP cannot catalyze homologous DNA strand exchange; SsbA and DprA activate strand exchange by RecA-ATP. It interacts with LexA causing its activation and leading to its autocatalytic cleavage. Hydrolysis of ATP in the presence of ssDNA is partially inhibited by RecU. Required for DNA transformation; protects transforming DNA from degradation, possibly in combination with DprA. Blocks replication of both leading and lagging strand DNA in the presence of RecO and SsbA; RecD2 is able to overcome this blockage. Its function is as follows. Recruited to repair centers (RCs), foci that are the site of double-stranded DNA break(s), after RecN. Concomitant with the appearance of RecO at the RCs, RecA forms threads that extend from RCs toward the opposite cell half, possibly searching for sequence homology along the sister chromosome. The threads disappear after about 2 hours. Thread formation is absolutely dependent on RecJ or AadAB. Thread formation is also dependent on RarA. The polypeptide is Protein RecA (Bacillus subtilis (strain 168)).